The sequence spans 579 residues: DBIRD complex subunit ZNF326 (579 aa).

The mediates transcriptional activation stretch occupies residues 1-124; sequence MDFEDDYTHS…YRNSLDSFGG (124 aa). A phosphoserine mark is found at Ser-48, Ser-56, Ser-63, Ser-69, Ser-81, Ser-82, Ser-91, Ser-106, Ser-114, Ser-118, Ser-121, and Ser-137. A Glycyl lysine isopeptide (Lys-Gly) (interchain with G-Cter in SUMO2) cross-link involves residue Lys-140. Residues 154-194 are disordered; that stretch reads YSSYSSFSSPHMKPAPVGSRGRGTPAYPESTFGSRNYDAFG. An Omega-N-methylarginine modification is found at Arg-173. At Ser-212 the chain carries Phosphoserine. Residue Arg-235 is modified to Omega-N-methylarginine. Residues 238–260 carry the Bipartite nuclear localization signal motif; the sequence is KRKMIQPFNKPGGTFIKKPKLAK. Lys-240 is covalently cross-linked (Glycyl lysine isopeptide (Lys-Gly) (interchain with G-Cter in SUMO2)). Position 247 is an N6-acetyllysine; alternate (Lys-247). Lys-247 is covalently cross-linked (Glycyl lysine isopeptide (Lys-Gly) (interchain with G-Cter in SUMO2); alternate). The segment at 248–302 is disordered; sequence PGGTFIKKPKLAKPVEKMSLSKSPTKTDPKNEEEEKRRIEARREKQRRRREKNSE. Thr-251 bears the Phosphothreonine mark. Residues Lys-254 and Lys-264 each participate in a glycyl lysine isopeptide (Lys-Gly) (interchain with G-Cter in SUMO2) cross-link. Ser-270 carries the post-translational modification Phosphoserine. Over residues 272–290 the composition is skewed to basic and acidic residues; sequence TKTDPKNEEEEKRRIEARR. Residues 314-336 form a C2H2 AKAP95-type 1 zinc finger; it reads CSFCKFRTFEEKDIELHLESASH. Residue Lys-401 forms a Glycyl lysine isopeptide (Lys-Gly) (interchain with G-Cter in SUMO2) linkage. A C2H2 AKAP95-type 2 zinc finger spans residues 407–430; sequence CSACSVYIPALHSSVQQHLKSPDH. Glycyl lysine isopeptide (Lys-Gly) (interchain with G-Cter in SUMO2) cross-links involve residues Lys-459 and Lys-467. The tract at residues 470–579 is disordered; the sequence is NPFEIQDHSQ…GFSVDQAEEN (110 aa). 3 stretches are compositionally biased toward acidic residues: residues 483 to 520, 529 to 541, and 549 to 565; these read IEGD…EEVG, GDTE…EGEG, and GEGE…EEAK.

Belongs to the AKAP95 family. Component of the DBIRD complex. Interacts with CCAR2; the interaction is direct.

It localises to the nucleus matrix. Functionally, core component of the DBIRD complex, a multiprotein complex that acts at the interface between core mRNP particles and RNA polymerase II (RNAPII) and integrates transcript elongation with the regulation of alternative splicing: the DBIRD complex affects local transcript elongation rates and alternative splicing of a large set of exons embedded in (A + T)-rich DNA regions. May play a role in neuronal differentiation and is able to bind DNA and activate expression in vitro. This is DBIRD complex subunit ZNF326 (ZNF326) from Bos taurus (Bovine).